We begin with the raw amino-acid sequence, 383 residues long: S-adenosylmethionine synthase (383 aa).

Position 15 (His15) interacts with ATP. Mg(2+) is bound at residue Asp17. Residue Glu43 participates in K(+) binding. L-methionine-binding residues include Glu56 and Gln99. A flexible loop region spans residues 99-109 (QSSDINQGVDR). ATP-binding positions include 164–166 (DAK), 230–231 (RF), Asp239, 245–246 (RK), Ala262, and Lys266. Asp239 is a binding site for L-methionine. An L-methionine-binding site is contributed by Lys270.

It belongs to the AdoMet synthase family. Homotetramer; dimer of dimers. The cofactor is Mg(2+). K(+) is required as a cofactor.

The protein resides in the cytoplasm. It carries out the reaction L-methionine + ATP + H2O = S-adenosyl-L-methionine + phosphate + diphosphate. Its pathway is amino-acid biosynthesis; S-adenosyl-L-methionine biosynthesis; S-adenosyl-L-methionine from L-methionine: step 1/1. Its function is as follows. Catalyzes the formation of S-adenosylmethionine (AdoMet) from methionine and ATP. The overall synthetic reaction is composed of two sequential steps, AdoMet formation and the subsequent tripolyphosphate hydrolysis which occurs prior to release of AdoMet from the enzyme. In Mannheimia succiniciproducens (strain KCTC 0769BP / MBEL55E), this protein is S-adenosylmethionine synthase.